The following is a 302-amino-acid chain: Sulfate adenylyltransferase subunit 2 (302 aa).

The protein belongs to the PAPS reductase family. CysD subfamily. In terms of assembly, heterodimer composed of CysD, the smaller subunit, and CysN.

It carries out the reaction sulfate + ATP + H(+) = adenosine 5'-phosphosulfate + diphosphate. The protein operates within sulfur metabolism; hydrogen sulfide biosynthesis; sulfite from sulfate: step 1/3. Functionally, with CysN forms the ATP sulfurylase (ATPS) that catalyzes the adenylation of sulfate producing adenosine 5'-phosphosulfate (APS) and diphosphate, the first enzymatic step in sulfur assimilation pathway. APS synthesis involves the formation of a high-energy phosphoric-sulfuric acid anhydride bond driven by GTP hydrolysis by CysN coupled to ATP hydrolysis by CysD. The protein is Sulfate adenylyltransferase subunit 2 of Sodalis glossinidius (strain morsitans).